The chain runs to 456 residues: Arginine biosynthesis bifunctional protein ArgJ, mitochondrial (456 aa).

Residues Thr184, Lys213, Thr224, Glu311, Asn451, and Thr456 each contribute to the substrate site. Thr224 serves as the catalytic Nucleophile.

Belongs to the ArgJ family. Heterodimer of an alpha and a beta chain. In terms of processing, the alpha and beta chains are autoproteolytically processed from a single precursor protein within the mitochondrion.

The protein localises to the mitochondrion matrix. The catalysed reaction is N(2)-acetyl-L-ornithine + L-glutamate = N-acetyl-L-glutamate + L-ornithine. It carries out the reaction L-glutamate + acetyl-CoA = N-acetyl-L-glutamate + CoA + H(+). It participates in amino-acid biosynthesis; L-arginine biosynthesis; L-ornithine and N-acetyl-L-glutamate from L-glutamate and N(2)-acetyl-L-ornithine (cyclic): step 1/1. Its pathway is amino-acid biosynthesis; L-arginine biosynthesis; N(2)-acetyl-L-ornithine from L-glutamate: step 1/4. Catalyzes two activities which are involved in the cyclic version of arginine biosynthesis: the synthesis of acetylglutamate from glutamate and acetyl-CoA, and of ornithine by transacetylation between acetylornithine and glutamate. This Neosartorya fischeri (strain ATCC 1020 / DSM 3700 / CBS 544.65 / FGSC A1164 / JCM 1740 / NRRL 181 / WB 181) (Aspergillus fischerianus) protein is Arginine biosynthesis bifunctional protein ArgJ, mitochondrial.